The chain runs to 1204 residues: Major DNA-binding protein (1204 aa).

A disordered region spans residues 289 to 314; sequence SGTTTARGARRNDVNSTSKPSPSGGF. The segment at 497–510 is a zinc-finger region; the sequence is CSLCEKHTRPVCAH. Short sequence motifs (required for filament formation) lie at residues 841 to 842 and 1146 to 1148; these read FW and FNF. Residues 1177-1204 form a required for nuclear localization region; sequence LKRPPEDDELFDLSGIPIKHGNITMEMI.

The protein belongs to the herpesviridae major DNA-binding protein family. Homooligomers. Forms double-helical filaments necessary for the formation of replication compartments within the host nucleus. Interacts with the origin-binding protein. Interacts with the helicase primase complex; this interaction stimulates primer synthesis activity of the helicase-primase complex. Interacts with the DNA polymerase. Interacts with the alkaline exonuclease; this interaction increases its nuclease processivity.

It is found in the host nucleus. Plays several crucial roles in viral infection. Participates in the opening of the viral DNA origin to initiate replication by interacting with the origin-binding protein. May disrupt loops, hairpins and other secondary structures present on ssDNA to reduce and eliminate pausing of viral DNA polymerase at specific sites during elongation. Promotes viral DNA recombination by performing strand-transfer, characterized by the ability to transfer a DNA strand from a linear duplex to a complementary single-stranded DNA circle. Can also catalyze the renaturation of complementary single strands. Additionally, reorganizes the host cell nucleus, leading to the formation of prereplicative sites and replication compartments. This process is driven by the protein which can form double-helical filaments in the absence of DNA. The polypeptide is Major DNA-binding protein (Homo sapiens (Human)).